A 143-amino-acid polypeptide reads, in one-letter code: Periplasmic nitrate reductase, electron transfer subunit (143 aa).

A signal peptide spans 1–22 (MKKILTLAAIVLAIGGCSGQQA). Heme c contacts are provided by His-72, Cys-85, Cys-88, His-89, His-106, Cys-121, Cys-124, and His-125.

It belongs to the NapB family. Component of the periplasmic nitrate reductase NapAB complex composed of NapA and NapB. Post-translationally, binds 2 heme C groups per subunit.

The protein resides in the periplasm. Electron transfer subunit of the periplasmic nitrate reductase complex NapAB. Receives electrons from the membrane-anchored tetraheme c-type CymA protein and transfers these to NapA subunit, thus allowing electron flow between membrane and periplasm. Not essential for nitrate reduction but confers advantage to the organism when grown on nitrate and thereby a fitness gain in utilizing nitrate. The polypeptide is Periplasmic nitrate reductase, electron transfer subunit (Shewanella oneidensis (strain ATCC 700550 / JCM 31522 / CIP 106686 / LMG 19005 / NCIMB 14063 / MR-1)).